A 421-amino-acid polypeptide reads, in one-letter code: MRVIVLGSGVIGVASAYYLARQGAEVTVLDRQSGPAEETSFGNAGQISPGYSTPWAAPGIPFKAVKWMFQHHAPLAINLDGSMWQLQWMAQMLKNCNPQSYAVNKERMMRVAEYSRDCLRELRKDTGIHYENRAKGTLQLFRKEAQMEAVQRDISVLEECGVSYELLNANELGRVEPALANAQDKLVGGLHLPNDETGDCYLFTNALAQIAKELGVNFQFNQNVEKLIVEGDQIKGVQVNGKILTADRYVLAFGSYSRDFLKPLDLQLPVYPVKGYSLTIPIVDPAFAPQSTVLDETYKIAITRFDQRIRVGGMAELSGFNLGLNEDRRATLQMVTQDLFPGGDMEQASFWTGLRPMTPDSTPIIGATRFKNLFLNTGHGTLGWTMACGSGKLISDIVLNHKTDISTDGLSIQRYSHAHAA.

3–17 (VIVLGSGVIGVASAY) serves as a coordination point for FAD.

It belongs to the DadA oxidoreductase family. FAD serves as cofactor.

The catalysed reaction is a D-alpha-amino acid + A + H2O = a 2-oxocarboxylate + AH2 + NH4(+). It participates in amino-acid degradation; D-alanine degradation; NH(3) and pyruvate from D-alanine: step 1/1. Oxidative deamination of D-amino acids. In Acinetobacter baumannii (strain ATCC 17978 / DSM 105126 / CIP 53.77 / LMG 1025 / NCDC KC755 / 5377), this protein is D-amino acid dehydrogenase.